A 212-amino-acid chain; its full sequence is Probable GTP-binding protein EngB (212 aa).

The region spanning 38-210 (SLPEIAFVGK…KASLAKCIKP (173 aa)) is the EngB-type G domain. GTP is bound by residues 46–53 (GKSNVGKS), 73–77 (GRTRQ), 91–94 (DLPG), 158–161 (TKSD), and 189–191 (VSN). Residues S53 and T75 each contribute to the Mg(2+) site.

The protein belongs to the TRAFAC class TrmE-Era-EngA-EngB-Septin-like GTPase superfamily. EngB GTPase family. Mg(2+) serves as cofactor.

Its function is as follows. Necessary for normal cell division and for the maintenance of normal septation. This Rickettsia peacockii (strain Rustic) protein is Probable GTP-binding protein EngB.